A 322-amino-acid polypeptide reads, in one-letter code: HPr kinase/phosphorylase (322 aa).

Residues His146 and Lys167 contribute to the active site. 161-168 (GDSGLGKS) is a binding site for ATP. Ser168 provides a ligand contact to Mg(2+). The active-site Proton acceptor; for phosphorylation activity. Proton donor; for dephosphorylation activity is Asp185. An important for the catalytic mechanism of both phosphorylation and dephosphorylation region spans residues 209-218 (LEVRGLGLLD). Glu210 serves as a coordination point for Mg(2+). Residue Arg250 is part of the active site. The important for the catalytic mechanism of dephosphorylation stretch occupies residues 271-276 (QVAAGR).

The protein belongs to the HPrK/P family. In terms of assembly, homohexamer. The cofactor is Mg(2+).

The enzyme catalyses [HPr protein]-L-serine + ATP = [HPr protein]-O-phospho-L-serine + ADP + H(+). It catalyses the reaction [HPr protein]-O-phospho-L-serine + phosphate + H(+) = [HPr protein]-L-serine + diphosphate. Functionally, catalyzes the ATP- as well as the pyrophosphate-dependent phosphorylation of a specific serine residue in HPr, a phosphocarrier protein of the phosphoenolpyruvate-dependent sugar phosphotransferase system (PTS). HprK/P also catalyzes the pyrophosphate-producing, inorganic phosphate-dependent dephosphorylation (phosphorolysis) of seryl-phosphorylated HPr (P-Ser-HPr). The sequence is that of HPr kinase/phosphorylase from Burkholderia cenocepacia (strain HI2424).